Consider the following 489-residue polypeptide: Putative general secretion pathway protein A (489 aa).

An ATP-binding site is contributed by 26–33; it reads GEAGSGKT. A helical transmembrane segment spans residues 237–257; that stretch reads MQLAVVMSGTIIALTCGWLLL.

It belongs to the ExeA family.

It is found in the cell membrane. Its function is as follows. May play a regulatory role under conditions of derepressed gsp gene expression. The chain is Putative general secretion pathway protein A (gspA) from Escherichia coli (strain K12).